Here is a 451-residue protein sequence, read N- to C-terminus: uncharacterized protein (451 aa).

The first 18 residues, 1-18, serve as a signal peptide directing secretion; it reads MRTRITLALAVLLLLLAG. C19 carries N-palmitoyl cysteine lipidation. Residue C19 is the site of S-diacylglycerol cysteine attachment. The interval 424-451 is disordered; that stretch reads TSADPPPGVPRAGKRNIRDATSRLPSTP.

It localises to the cell membrane. Its function is as follows. May participate in oleandomycin glycosylation and secretion during antibiotic production. This is an uncharacterized protein from Streptomyces antibioticus.